We begin with the raw amino-acid sequence, 231 residues long: Caspase-like protein (231 aa).

This sequence belongs to the peptidase C14A family.

The protein is Caspase-like protein of Trichoplusia ni ascovirus 2c (TnAV-2c).